Here is a 417-residue protein sequence, read N- to C-terminus: Phosphoglycerate kinase 1 (417 aa).

Ser2 bears the N-acetylserine mark. A phosphoserine mark is found at Ser2 and Ser4. Residues 2–186 form a globular domain-1 region; it reads SLSNKLTLDK…VGVNLPQKAG (185 aa). Lys6 carries the N6-succinyllysine modification. Lys11 is modified (N6-acetyllysine). The (2R)-3-phosphoglycerate site is built by Val23, Asp24, Phe25, Asn26, Gln38, and Arg39. A mitochondrial targeting region exposed following cis-trans isomerization by PIN1 and recognized by the TOM complex for mitochondrial translocation of the protein region spans residues 38–43; the sequence is QRIKAA. At Lys48 the chain carries N6-acetyllysine; alternate. Lys48 is subject to N6-succinyllysine; alternate. Positions 62, 63, 65, and 66 each coordinate (2R)-3-phosphoglycerate. N6-acetyllysine is present on Lys75. The residue at position 76 (Tyr76) is a Phosphotyrosine. 2 positions are modified to N6-acetyllysine: Lys86 and Lys91. N6-acetyllysine; alternate is present on Lys97. At Lys97 the chain carries N6-(2-hydroxyisobutyryl)lysine; alternate. The (2R)-3-phosphoglycerate site is built by Leu122 and Arg123. At Lys131 the chain carries N6-acetyllysine; alternate. Lys131 is subject to N6-malonyllysine; alternate. Position 146 is an N6-acetyllysine (Lys146). Residues His170 and Arg171 each coordinate (2R)-3-phosphoglycerate. The linker stretch occupies residues 187–190; the sequence is GFLM. Residue Lys191 is modified to N6-succinyllysine. The globular domain-2 stretch occupies residues 191–417; sequence KKELNYFAKA…LPGVDALSNV (227 aa). Tyr196 carries the post-translational modification Phosphotyrosine. At Lys199 the chain carries N6-acetyllysine. At Ser203 the chain carries Phosphoserine. Gly214 contributes to the ADP binding site. CDP is bound at residue Gly214. Residues Ala215 and Lys216 each coordinate AMP. Position 215 (Ala215) interacts with ATP. Residue Ala215 participates in Mg(2+) binding. Lys216 carries the post-translational modification N6-(2-hydroxyisobutyryl)lysine. Mg(2+)-binding residues include Ala218 and Asp219. Asp219 lines the CDP pocket. AMP is bound at residue Lys220. Lys220 serves as a coordination point for ATP. At Lys220 the chain carries N6-(2-hydroxyisobutyryl)lysine. Residue Gly238 coordinates ADP. Gly238 provides a ligand contact to CDP. Residue Gly239 participates in AMP binding. An ATP-binding site is contributed by Gly239. N6-acetyllysine occurs at positions 267 and 291. Gly313 is a binding site for AMP. Gly313 provides a ligand contact to ATP. N6-(2-hydroxyisobutyryl)lysine is present on Lys323. CDP-binding residues include Gly338, Val340, and Phe343. An ADP-binding site is contributed by Phe343. An AMP-binding site is contributed by Glu344. Glu344 lines the ATP pocket. An N6-acetyllysine modification is found at Lys361. Positions 375 and 376 each coordinate ATP. Mg(2+) is bound at residue Asp375. Positions 406-417 are associated with globular domain 1; it reads KVLPGVDALSNV.

It belongs to the phosphoglycerate kinase family. In terms of assembly, monomer. Interacts with kinase MAPK1/ERK2; the interaction is direct, occurs under hypoxic conditions, and promotes its interaction with PIN1. Interacts with peptidyl-prolyl cis-trans isomerase PIN1; the interaction is direct, occurs under hypoxic conditions, and targets the protein to the mitochondrion by promoting interactions with the TOM complex. Interacts with mitochondrial circRNA mcPGK1 (via its 2nd stem-loop); the interaction is direct and targets the protein to the mitochondrion by promoting interactions with the TOM complex. Interacts with pyruvate dehydrogenase kinase PDK1; the interaction is direct, occurs under hypoxic conditions and leads to PDK1-mediated inhibition of pyruvate dehydrogenase complex activity. The cofactor is Mg(2+). In terms of processing, phosphorylated at Ser-203 by MAPK1/ERK2 under hypoxic conditions, which promotes its mitochondrial targeting.

Its subcellular location is the cytoplasm. It localises to the cytosol. The protein localises to the mitochondrion matrix. The enzyme catalyses (2R)-3-phosphoglycerate + ATP = (2R)-3-phospho-glyceroyl phosphate + ADP. It carries out the reaction L-seryl-[protein] + ATP = O-phospho-L-seryl-[protein] + ADP + H(+). The protein operates within carbohydrate degradation; glycolysis; pyruvate from D-glyceraldehyde 3-phosphate: step 2/5. Catalyzes one of the two ATP producing reactions in the glycolytic pathway via the reversible conversion of 1,3-diphosphoglycerate to 3-phosphoglycerate. Both L- and D- forms of purine and pyrimidine nucleotides can be used as substrates, but the activity is much lower on pyrimidines. In addition to its role as a glycolytic enzyme, it seems that PGK-1 acts as a polymerase alpha cofactor protein (primer recognition protein). Acts as a protein kinase when localized to the mitochondrion where it phosphorylates pyruvate dehydrogenase kinase PDK1 to inhibit pyruvate dehydrogenase complex activity and suppress the formation of acetyl-coenzyme A from pyruvate, and consequently inhibit oxidative phosphorylation and promote glycolysis. May play a role in sperm motility. The sequence is that of Phosphoglycerate kinase 1 (PGK1) from Equus caballus (Horse).